The following is a 162-amino-acid chain: Probable chemoreceptor glutamine deamidase CheD (162 aa).

The protein belongs to the CheD family.

The catalysed reaction is L-glutaminyl-[protein] + H2O = L-glutamyl-[protein] + NH4(+). Functionally, probably deamidates glutamine residues to glutamate on methyl-accepting chemotaxis receptors (MCPs), playing an important role in chemotaxis. The protein is Probable chemoreceptor glutamine deamidase CheD of Clostridium botulinum (strain ATCC 19397 / Type A).